A 179-amino-acid polypeptide reads, in one-letter code: GTP-dependent dephospho-CoA kinase (179 aa).

5 residues coordinate GTP: aspartate 55, valine 57, aspartate 74, lysine 76, and glutamate 128.

It belongs to the GTP-dependent DPCK family.

It catalyses the reaction 3'-dephospho-CoA + GTP = GDP + CoA + H(+). Its pathway is cofactor biosynthesis; coenzyme A biosynthesis. Catalyzes the GTP-dependent phosphorylation of the 3'-hydroxyl group of dephosphocoenzyme A to form coenzyme A (CoA). In Saccharolobus islandicus (strain M.16.4 / Kamchatka #3) (Sulfolobus islandicus), this protein is GTP-dependent dephospho-CoA kinase.